A 377-amino-acid chain; its full sequence is Succinyl-diaminopimelate desuccinylase (377 aa).

His66 lines the Zn(2+) pocket. Residue Asp68 is part of the active site. Asp99 contacts Zn(2+). Residue Glu133 is the Proton acceptor of the active site. The Zn(2+) site is built by Glu134, Glu163, and His349.

It belongs to the peptidase M20A family. DapE subfamily. As to quaternary structure, homodimer. It depends on Zn(2+) as a cofactor. The cofactor is Co(2+).

The catalysed reaction is N-succinyl-(2S,6S)-2,6-diaminopimelate + H2O = (2S,6S)-2,6-diaminopimelate + succinate. The protein operates within amino-acid biosynthesis; L-lysine biosynthesis via DAP pathway; LL-2,6-diaminopimelate from (S)-tetrahydrodipicolinate (succinylase route): step 3/3. Functionally, catalyzes the hydrolysis of N-succinyl-L,L-diaminopimelic acid (SDAP), forming succinate and LL-2,6-diaminopimelate (DAP), an intermediate involved in the bacterial biosynthesis of lysine and meso-diaminopimelic acid, an essential component of bacterial cell walls. This chain is Succinyl-diaminopimelate desuccinylase, found in Legionella pneumophila (strain Paris).